The chain runs to 455 residues: Exodeoxyribonuclease 7 large subunit (455 aa).

Belongs to the XseA family. Heterooligomer composed of large and small subunits.

The protein localises to the cytoplasm. The catalysed reaction is Exonucleolytic cleavage in either 5'- to 3'- or 3'- to 5'-direction to yield nucleoside 5'-phosphates.. Functionally, bidirectionally degrades single-stranded DNA into large acid-insoluble oligonucleotides, which are then degraded further into small acid-soluble oligonucleotides. The sequence is that of Exodeoxyribonuclease 7 large subunit from Koribacter versatilis (strain Ellin345).